A 739-amino-acid polypeptide reads, in one-letter code: Malate synthase G (739 aa).

Polar residues predominate over residues 1-18 (MTEQELLSAQTADNAGTD). A disordered region spans residues 1–23 (MTEQELLSAQTADNAGTDSTERV). Residues V135, 142–143 (RF), S292, and R329 each bind acetyl-CoA. R356 serves as the catalytic Proton acceptor. Residues R356, E447, and 472–475 (GFLD) each bind glyoxylate. Residues E447 and D475 each contribute to the Mg(2+) site. P556 is a binding site for acetyl-CoA. At C633 the chain carries Cysteine sulfenic acid (-SOH). The active-site Proton donor is D647.

Belongs to the malate synthase family. GlcB subfamily. Monomer. Mg(2+) is required as a cofactor.

The protein resides in the cytoplasm. It carries out the reaction glyoxylate + acetyl-CoA + H2O = (S)-malate + CoA + H(+). The protein operates within carbohydrate metabolism; glyoxylate cycle; (S)-malate from isocitrate: step 2/2. With respect to regulation, inhibited by oxalate, glycolate and ATP. In terms of biological role, involved in the glycolate utilization. Catalyzes the condensation and subsequent hydrolysis of acetyl-coenzyme A (acetyl-CoA) and glyoxylate to form malate and CoA. This chain is Malate synthase G, found in Corynebacterium glutamicum (strain ATCC 13032 / DSM 20300 / JCM 1318 / BCRC 11384 / CCUG 27702 / LMG 3730 / NBRC 12168 / NCIMB 10025 / NRRL B-2784 / 534).